The chain runs to 316 residues: Taste receptor type 2 member 3 (316 aa).

The Extracellular segment spans residues 1–6 (MMGLTE). The helical transmembrane segment at 7–27 (GVFLILSGTQFTLGILVNCFI) threads the bilayer. The Cytoplasmic segment spans residues 28-42 (ELVNGSSWFKTKRMS). The chain crosses the membrane as a helical span at residues 43 to 63 (LSDFIITTLALLRIILLCIIL). The Extracellular segment spans residues 64–94 (TDSFLIEFSPNTHDSGIIMQIIDVSWTFTNH). Residues 95-115 (LSIWLATCLGVLYCLKIASFS) form a helical membrane-spanning segment. Over 116 to 128 (HPTFLWLKWRVSR) the chain is Cytoplasmic. A helical membrane pass occupies residues 129-149 (VMVWMLLGALLLSCGSTASLI). Residues 150–186 (NEFKLYSVFRGIEATRNVTEHFRKKRSEYYLIHVLGT) lie on the Extracellular side of the membrane. Asn166 is a glycosylation site (N-linked (GlcNAc...) asparagine). A helical membrane pass occupies residues 187–207 (LWYLPPLIVSLASYSLLIFSL). Residues 208-234 (GRHTRQMLQNGTSSRDPTTEAHKRAIR) lie on the Cytoplasmic side of the membrane. The chain crosses the membrane as a helical span at residues 235–255 (IILSFFFLFLLYFLAFLIASF). The Extracellular segment spans residues 256–266 (GNFLPKTKMAK). Residues 267–287 (MIGEVMTMFYPAGHSFILILG) traverse the membrane as a helical segment. The Cytoplasmic portion of the chain corresponds to 288-316 (NSKLKQTFVVMLRCESGHLKPGSKGPIFS).

This sequence belongs to the G-protein coupled receptor T2R family. As to expression, expressed in subsets of taste receptor cells of the tongue and palate epithelium and exclusively in gustducin-positive cells. Expressed in the antrum and fundus (part of the stomach), duodenum and in gastric endocrine cells.

It localises to the membrane. Its function is as follows. Gustducin-coupled receptor implicated in the perception of bitter compounds in the oral cavity and the gastrointestinal tract. Signals through PLCB2 and the calcium-regulated cation channel TRPM5. The polypeptide is Taste receptor type 2 member 3 (TAS2R3) (Homo sapiens (Human)).